The chain runs to 247 residues: 3-deoxy-manno-octulosonate cytidylyltransferase (247 aa).

It belongs to the KdsB family.

The protein resides in the cytoplasm. It carries out the reaction 3-deoxy-alpha-D-manno-oct-2-ulosonate + CTP = CMP-3-deoxy-beta-D-manno-octulosonate + diphosphate. It participates in nucleotide-sugar biosynthesis; CMP-3-deoxy-D-manno-octulosonate biosynthesis; CMP-3-deoxy-D-manno-octulosonate from 3-deoxy-D-manno-octulosonate and CTP: step 1/1. The protein operates within bacterial outer membrane biogenesis; lipopolysaccharide biosynthesis. Activates KDO (a required 8-carbon sugar) for incorporation into bacterial lipopolysaccharide in Gram-negative bacteria. This chain is 3-deoxy-manno-octulosonate cytidylyltransferase, found in Leptospira interrogans serogroup Icterohaemorrhagiae serovar Lai (strain 56601).